Here is a 626-residue protein sequence, read N- to C-terminus: Chaperone protein HtpG (626 aa).

Residues 1 to 331 (MSETVERHEF…TDDLPLNVSR (331 aa)) are a; substrate-binding. The b stretch occupies residues 332 to 544 (EMLQSTPTLQ…GMGPDLQMQR (213 aa)). A c region spans residues 545-626 (LLRRAGRGFG…GTAAKPAGSA (82 aa)).

Belongs to the heat shock protein 90 family. Homodimer.

The protein localises to the cytoplasm. Its function is as follows. Molecular chaperone. Has ATPase activity. The chain is Chaperone protein HtpG from Methylorubrum extorquens (strain CM4 / NCIMB 13688) (Methylobacterium extorquens).